The chain runs to 734 residues: Fc receptor-like protein 3 (734 aa).

An N-terminal signal peptide occupies residues 1-17 (MLLWLLLLILTPGREQS). At 18–573 (GVAPKAVLLL…GTSRNRTGLT (556 aa)) the chain is on the extracellular side. Ig-like C2-type domains lie at 21–98 (PKAV…VEFS), 99–182 (PDWL…KPLN), 192–270 (PVLR…HSIK), 284–369 (PVSN…PILS), 383–470 (PVLT…LRVT), and 476–563 (PVLT…LNVT). Intrachain disulfides connect cysteine 44–cysteine 82, cysteine 120–cysteine 163, cysteine 211–cysteine 260, cysteine 309–cysteine 358, cysteine 404–cysteine 451, and cysteine 497–cysteine 544. A glycan (N-linked (GlcNAc...) asparagine) is linked at asparagine 561. A helical membrane pass occupies residues 574 to 594 (AAGITGLVLSILVLAAAAALL). Residues 595 to 734 (HYARARRKPG…VPRVLLASDH (140 aa)) are Cytoplasmic-facing. The disordered stretch occupies residues 603 to 655 (PGGLSATGTSSHSPSECQEPSSSRPSRIDPQEPTHSKPLAPMELEPMYSNVNP). Residues 608 to 627 (ATGTSSHSPSECQEPSSSRP) show a composition bias toward polar residues. The segment covering 628–637 (SRIDPQEPTH) has biased composition (basic and acidic residues). 4 consecutive short sequence motifs (ITIM motif) follow at residues 648–653 (PMYSNV), 660–665 (PIYSQI), 690–695 (VLYSEL), and 720–725 (ENYENV). Residues tyrosine 650, tyrosine 662, tyrosine 692, and tyrosine 722 each carry the phosphotyrosine modification. Residues 695 to 734 (LKKTHPDDSAGEASSRGRAHEEDDEENYENVPRVLLASDH) are disordered.

In terms of assembly, interacts (via phosphorylated ITIM motifs) with phosphatases INPP5D, PTPN6 and PTPN11. Interacts (via ITIM motifs) SYK and ZAP70. Interacts with IZUMO1R/JUNO. Interacts (via extracellular domain) with IZUMO1; the interaction replaces IZUMO1R/JUNO as IZUMO1 receptor after adhesion between sperm and egg. In terms of processing, phosphorylated on cytoplasmic tyrosines; required for interaction with protein tyrosine phosphatases and protein tyrosine kinases. Primarily expressed in secondary lymphoid tissues by mature subsets of B-cells. Low expression on transitional B cells which increases to higher surface expression on mature and memory B-cells with innate-like features (at protein level). Expressed a low levels in naive and germinal center B-cells but also expressed in NK cells (at protein level). Expressed in unfertilized oocytes (at protein level). Expressed in a population of thymically derived naturally occurring regulatory T-cells that exhibits a memory phenotype, specialized in suppressing immune response to self-antigens. Detected in spleen, lymph node, peripheral blood lymphocytes, thymus, bone marrow, kidney, salivary gland, adrenal gland and uterus.

Its subcellular location is the cell membrane. The protein localises to the cell projection. It localises to the microvillus membrane. Functionally, promotes TLR9-induced B-cell proliferation, activation and survival but inhibits antibody production and suppresses plasma cell differentiation. Enhances activation of NF-kappa-B and MAPK signaling pathways in TLR9 stimulated B-cells. Has inhibitory potentional on B-cell receptor (BCR)-mediated signaling, possibly through association with SH2 domain-containing phosphatases. Inhibits cell tyrosine phosphorylation, calcium mobilization and activation-induced cell death induced through BCR signaling. Regulatory T-cells expressing FCRL3 exhibit a memory phenotype, are relatively nonresponsive to antigenic stimulation in presence of IL2 and have reduced capacity to suppress the proliferation of effector T-cells. Acts as a human-specific epitope on the cell surface of oocytes (oolemma) and plays a role during sperm-egg adhesion and fusion. Interacts with the IZUMO1-IZUMO1R/JUNO sperm-egg complex and replaces IZUMO1R/JUNO as IZUMO1 receptor during fertilization, thereby permitting species-specific gamete fusion. The chain is Fc receptor-like protein 3 from Homo sapiens (Human).